The chain runs to 275 residues: MDVWEWVVAAILGLVEGLTEYAPVSSTGHMIIVDDLWLKSSELVGSQNAYVFKIVIQLGSILAVALLFKDRLLQLAGFKKQAATQSEGRGLTLGKVAVGLLPAAVLGLLFEDKMESIFHVRTVAFALIAGAFLMIAADFINKRNNKKKQQVDDISYKQALAIGLFQCLALWPGFSRSGSTISGGVMLGLTHRAAANFTFIMAIPIMVGASALSLIKNWDALDISLLPFYATGFISAFLVSLVVVRFFLKLINKIKLVPFALYRIALGLLLLFLFS.

7 consecutive transmembrane segments (helical) span residues 48-68, 90-110, 117-137, 154-174, 195-215, 223-243, and 254-274; these read NAYV…ALLF, GLTL…GLLF, IFHV…MIAA, ISYK…WPGF, ANFT…LSLI, ISLL…SLVV, and IKLV…LFLF.

It belongs to the UppP family.

The protein localises to the cell membrane. It carries out the reaction di-trans,octa-cis-undecaprenyl diphosphate + H2O = di-trans,octa-cis-undecaprenyl phosphate + phosphate + H(+). Its function is as follows. Catalyzes the dephosphorylation of undecaprenyl diphosphate (UPP). Confers resistance to bacitracin. The sequence is that of Undecaprenyl-diphosphatase 2 from Shouchella clausii (strain KSM-K16) (Alkalihalobacillus clausii).